We begin with the raw amino-acid sequence, 88 residues long: MANSAQARKRVRQNNTRRQHAASQRSMIRTYIKKVDAAILAGDYDAATAAYNKAVPVIDRMADKGVIHKNKAARHKSRYNKAIKALKA.

A disordered region spans residues 1-25 (MANSAQARKRVRQNNTRRQHAASQR). The segment covering 7 to 20 (ARKRVRQNNTRRQH) has biased composition (basic residues).

It belongs to the bacterial ribosomal protein bS20 family.

Its function is as follows. Binds directly to 16S ribosomal RNA. The chain is Small ribosomal subunit protein bS20 from Psychrobacter sp. (strain PRwf-1).